The sequence spans 92 residues: Acylphosphatase (92 aa).

The Acylphosphatase-like domain maps to 5 to 92 (YIVAYVYGVV…TPFETFSIRY (88 aa)). Residues R20 and N38 contribute to the active site.

This sequence belongs to the acylphosphatase family.

It carries out the reaction an acyl phosphate + H2O = a carboxylate + phosphate + H(+). The polypeptide is Acylphosphatase (acyP) (Yersinia pseudotuberculosis serotype O:1b (strain IP 31758)).